Reading from the N-terminus, the 210-residue chain is Large ribosomal subunit protein bL25 (210 aa).

Residues 179–210 (LPPQQEEEIHSGEQQEPGQPEAEEGRETTPEG) form a disordered region. Residues 201–210 (EEGRETTPEG) show a composition bias toward basic and acidic residues.

It belongs to the bacterial ribosomal protein bL25 family. CTC subfamily. In terms of assembly, part of the 50S ribosomal subunit; part of the 5S rRNA/L5/L18/L25 subcomplex. Contacts the 5S rRNA. Binds to the 5S rRNA independently of L5 and L18.

In terms of biological role, this is one of the proteins that binds to the 5S RNA in the ribosome where it forms part of the central protuberance. The polypeptide is Large ribosomal subunit protein bL25 (Geobacillus thermodenitrificans (strain NG80-2)).